Consider the following 537-residue polypeptide: uncharacterized protein (537 aa).

The first 15 residues, 1-15 (MALFQLFSFLNVTLG), serve as a signal peptide directing secretion. Transmembrane regions (helical) follow at residues 459-479 (VLFSAISACLSFIIDVGGCCF) and 490-510 (VILLLLLLPNYTHLTFILGFT).

The protein resides in the host membrane. This is an uncharacterized protein from Citrus sinensis (Sweet orange).